The chain runs to 369 residues: Phosphatidylglycerol--prolipoprotein diacylglyceryl transferase (369 aa).

3 helical membrane-spanning segments follow: residues 26 to 46, 60 to 80, and 97 to 117; these read YYGI…ILTL, YVFI…FIIG, and LAIQ…FFFI. R167 is an a 1,2-diacyl-sn-glycero-3-phospho-(1'-sn-glycerol) binding site. 2 consecutive transmembrane segments (helical) span residues 216–236 and 273–293; these read VPIF…IVFL and FVTS…GFIF.

This sequence belongs to the Lgt family.

The protein localises to the cell membrane. The enzyme catalyses L-cysteinyl-[prolipoprotein] + a 1,2-diacyl-sn-glycero-3-phospho-(1'-sn-glycerol) = an S-1,2-diacyl-sn-glyceryl-L-cysteinyl-[prolipoprotein] + sn-glycerol 1-phosphate + H(+). It functions in the pathway protein modification; lipoprotein biosynthesis (diacylglyceryl transfer). Catalyzes the transfer of the diacylglyceryl group from phosphatidylglycerol to the sulfhydryl group of the N-terminal cysteine of a prolipoprotein, the first step in the formation of mature lipoproteins. This chain is Phosphatidylglycerol--prolipoprotein diacylglyceryl transferase, found in Mycoplasmoides gallisepticum (strain R(low / passage 15 / clone 2)) (Mycoplasma gallisepticum).